The chain runs to 155 residues: MSRRGTAEEKTAKSDPIYRNRLVNMLVNRILKHGKKSLAYQIIYRAVKKIQQKTETNPLSVLRQAIRGVTPDIAVKSRRVGGSTHQVPVEIGSTQGKALAIRWLLGASRKRPGRNMAFKLSSELVDAAKGSGDAIRKKEETHRMAEANRAFAHFR.

It belongs to the universal ribosomal protein uS7 family. Part of the 30S ribosomal subunit.

It is found in the plastid. Its subcellular location is the chloroplast. One of the primary rRNA binding proteins, it binds directly to 16S rRNA where it nucleates assembly of the head domain of the 30S subunit. This chain is Small ribosomal subunit protein uS7cz/uS7cy (rps7-A), found in Ceratophyllum demersum (Rigid hornwort).